The primary structure comprises 362 residues: Glycyl-glycine endopeptidase ALE-1 (362 aa).

An N-terminal signal peptide occupies residues Met-1–Ala-35. The disordered stretch occupies residues Ala-35–Glu-110. The span at Asp-40–Glu-110 shows a compositional bias: basic and acidic residues. Residues His-150 and Asp-154 each contribute to the Zn(2+) site. The active site involves His-231. His-233 provides a ligand contact to Zn(2+). The SH3b domain maps to Ser-282 to Ser-350.

This sequence belongs to the peptidase M23B family. It depends on Zn(2+) as a cofactor.

The protein resides in the secreted. It catalyses the reaction Hydrolysis of the -Gly-|-Gly- bond in the pentaglycine inter-peptide link joining staphylococcal cell wall peptidoglycans.. Functionally, lyses staphylococcal cells by hydrolyzing the polyglycine interpeptide bridges of the peptidoglycan. The chain is Glycyl-glycine endopeptidase ALE-1 from Staphylococcus capitis.